The primary structure comprises 279 residues: Prephenate dehydratase (279 aa).

In terms of domain architecture, Prephenate dehydratase spans 2–178 (KIAYLGPRGS…NSTRFWLLGK (177 aa)). Residues 194–272 (LALTLPDNLP…VNVRLLGNYS (79 aa)) enclose the ACT domain.

It carries out the reaction prephenate + H(+) = 3-phenylpyruvate + CO2 + H2O. The protein operates within amino-acid biosynthesis; L-phenylalanine biosynthesis; phenylpyruvate from prephenate: step 1/1. The polypeptide is Prephenate dehydratase (pheA) (Lactococcus lactis subsp. cremoris (strain MG1363)).